The following is a 34-amino-acid chain: Photosystem II reaction center protein M (34 aa).

A helical membrane pass occupies residues 7-27 (GFVATLLFVLVPAIFLIILYI).

Belongs to the PsbM family. PSII is composed of 1 copy each of membrane proteins PsbA, PsbB, PsbC, PsbD, PsbE, PsbF, PsbH, PsbI, PsbJ, PsbK, PsbL, PsbM, PsbT, PsbX, PsbY, PsbZ, Psb30/Ycf12, peripheral proteins PsbO, CyanoQ (PsbQ), PsbU, PsbV and a large number of cofactors. It forms dimeric complexes.

Its subcellular location is the cellular thylakoid membrane. In terms of biological role, one of the components of the core complex of photosystem II (PSII). PSII is a light-driven water:plastoquinone oxidoreductase that uses light energy to abstract electrons from H(2)O, generating O(2) and a proton gradient subsequently used for ATP formation. It consists of a core antenna complex that captures photons, and an electron transfer chain that converts photonic excitation into a charge separation. This subunit is found at the monomer-monomer interface. The polypeptide is Photosystem II reaction center protein M (Synechococcus sp. (strain RCC307)).